Here is a 1100-residue protein sequence, read N- to C-terminus: Serine/threonine/tyrosine-interacting-like protein 2 (1100 aa).

Residues 1–12 (MASSVEDQQLQQ) show a composition bias toward polar residues. Residues 1–21 (MASSVEDQQLQQEEAESVKDV) form a disordered region. A Tyrosine-protein phosphatase domain is found at 141 to 289 (SPVDEVWPNV…LRQLNETLME (149 aa)). Over residues 356-374 (CGSQQPNMQQPADQPSLPG) the composition is skewed to polar residues. Disordered regions lie at residues 356 to 383 (CGSQ…EDGD), 411 to 436 (EDED…TSED), 479 to 504 (AAAR…DDVQ), 542 to 561 (KENA…APDL), 575 to 615 (KQQK…ERSR), 667 to 686 (VLSG…TPAP), 888 to 1060 (CEKP…DEEI), and 1075 to 1100 (VAEE…HDHK). A compositionally biased stretch (basic and acidic residues) spans 418–428 (DKTQRAVRPDD). The segment covering 580 to 615 (HGGEENKEEILQMSRGEDTATARRRQRREEVLERSR) has biased composition (basic and acidic residues). Residues 667–676 (VLSGRSTRSL) show a composition bias toward low complexity. Basic and acidic residues predominate over residues 888–898 (CEKPKPKRDYG). Polar residues-rich tracts occupy residues 907–916 (ASANNPTSSI), 994–1013 (SYSS…TSFA), and 1029–1041 (FQNH…SSVY). The span at 1089–1100 (RKQEESKSHDHK) shows a compositional bias: basic and acidic residues.

Belongs to the protein-tyrosine phosphatase family. Non-receptor class dual specificity subfamily. As to expression, expressed in muscle fibers in a regular striated pattern (at protein level).

It is found in the cytoplasm. The protein resides in the myofibril. Its subcellular location is the sarcomere. In terms of biological role, required for myofiber maturation. In Danio rerio (Zebrafish), this protein is Serine/threonine/tyrosine-interacting-like protein 2 (styxl2).